Here is a 674-residue protein sequence, read N- to C-terminus: DNA ligase (674 aa).

Residues 34-38, 83-84, and glutamate 117 each bind NAD(+); these read DFEFD and SL. Lysine 119 serves as the catalytic N6-AMP-lysine intermediate. NAD(+)-binding residues include arginine 140, glutamate 184, lysine 297, and lysine 321. Cysteine 415, cysteine 418, cysteine 433, and cysteine 439 together coordinate Zn(2+). A BRCT domain is found at 598 to 674; it reads LVNNNFEGQS…IDEDEFERML (77 aa).

Belongs to the NAD-dependent DNA ligase family. LigA subfamily. Mg(2+) serves as cofactor. The cofactor is Mn(2+).

It carries out the reaction NAD(+) + (deoxyribonucleotide)n-3'-hydroxyl + 5'-phospho-(deoxyribonucleotide)m = (deoxyribonucleotide)n+m + AMP + beta-nicotinamide D-nucleotide.. Functionally, DNA ligase that catalyzes the formation of phosphodiester linkages between 5'-phosphoryl and 3'-hydroxyl groups in double-stranded DNA using NAD as a coenzyme and as the energy source for the reaction. It is essential for DNA replication and repair of damaged DNA. The chain is DNA ligase from Chlorobaculum tepidum (strain ATCC 49652 / DSM 12025 / NBRC 103806 / TLS) (Chlorobium tepidum).